We begin with the raw amino-acid sequence, 422 residues long: Glutamyl-tRNA reductase (422 aa).

Residues 48–51 (TCNR), S100, 105–107 (EDQ), and Q111 contribute to the substrate site. C49 acts as the Nucleophile in catalysis. 180-185 (GTGEMG) lines the NADP(+) pocket.

The protein belongs to the glutamyl-tRNA reductase family. As to quaternary structure, homodimer.

It carries out the reaction (S)-4-amino-5-oxopentanoate + tRNA(Glu) + NADP(+) = L-glutamyl-tRNA(Glu) + NADPH + H(+). The protein operates within porphyrin-containing compound metabolism; protoporphyrin-IX biosynthesis; 5-aminolevulinate from L-glutamyl-tRNA(Glu): step 1/2. Functionally, catalyzes the NADPH-dependent reduction of glutamyl-tRNA(Glu) to glutamate 1-semialdehyde (GSA). In Methanococcoides burtonii (strain DSM 6242 / NBRC 107633 / OCM 468 / ACE-M), this protein is Glutamyl-tRNA reductase.